The sequence spans 259 residues: Haloacid dehalogenase-like hydrolase domain-containing protein 2 (259 aa).

Residues D13 and S15 each contribute to the Mg(2+) site. Residues 13 to 15 and 46 to 47 each bind substrate; these read DLS and TN. Residues 47 to 71 are a coiled coil; sequence NTTKESKQDLLERLKKLEFDISEDE. K50 carries the N6-succinyllysine modification. Position 179 (K179) interacts with substrate. D204 contributes to the Mg(2+) binding site.

It belongs to the HAD-like hydrolase superfamily. It depends on Mg(2+) as a cofactor.

This chain is Haloacid dehalogenase-like hydrolase domain-containing protein 2 (HDHD2), found in Bos taurus (Bovine).